A 434-amino-acid chain; its full sequence is Transcriptional enhancer factor TEF-3 (434 aa).

The segment covering 1–28 (MEGTAGTITSNEWSSPTSPEGSTASGGS) has biased composition (polar residues). Disordered stretches follow at residues 1–42 (MEGT…AEGV) and 188–215 (QPPL…PPWQ). The segment at residues 36–112 (DNDAEGVWSP…QVLARRKARE (77 aa)) is a DNA-binding region (TEA). Pro residues predominate over residues 201–213 (GPAPSPSAPPAPP).

In terms of assembly, interacts with YAP1 and WWTR1/TAZ. In terms of tissue distribution, preferentially expressed in skeletal muscle. Lower levels in pancreas, placenta, and heart.

It localises to the nucleus. Functionally, transcription factor which plays a key role in the Hippo signaling pathway, a pathway involved in organ size control and tumor suppression by restricting proliferation and promoting apoptosis. The core of this pathway is composed of a kinase cascade wherein MST1/MST2, in complex with its regulatory protein SAV1, phosphorylates and activates LATS1/2 in complex with its regulatory protein MOB1, which in turn phosphorylates and inactivates YAP1 oncoprotein and WWTR1/TAZ. Acts by mediating gene expression of YAP1 and WWTR1/TAZ, thereby regulating cell proliferation, migration and epithelial mesenchymal transition (EMT) induction. Binds specifically and non-cooperatively to the Sph and GT-IIC 'enhansons' (5'-GTGGAATGT-3') and activates transcription. Binds to the M-CAT motif. In Homo sapiens (Human), this protein is Transcriptional enhancer factor TEF-3 (TEAD4).